The primary structure comprises 70 residues: DNA-directed RNA polymerase subunit omega (70 aa).

This sequence belongs to the RNA polymerase subunit omega family. The RNAP catalytic core consists of 2 alpha, 1 beta, 1 beta' and 1 omega subunit. When a sigma factor is associated with the core the holoenzyme is formed, which can initiate transcription.

The enzyme catalyses RNA(n) + a ribonucleoside 5'-triphosphate = RNA(n+1) + diphosphate. In terms of biological role, promotes RNA polymerase assembly. Latches the N- and C-terminal regions of the beta' subunit thereby facilitating its interaction with the beta and alpha subunits. The polypeptide is DNA-directed RNA polymerase subunit omega (Nitratiruptor sp. (strain SB155-2)).